A 187-amino-acid chain; its full sequence is Alpha-D-galactose-binding lectin (187 aa).

Residues 1–37 form the signal peptide; it reads MTFAKQSCFNSIILLSIATSYFKIGHKISELGNRIEK. An N-acetylthreonine modification is found at threonine 39. Residues 53 to 56, aspartate 64, 72 to 76, histidine 101, glycine 104, glutamate 112, 120 to 122, histidine 145, glycine 148, glutamate 156, and 164 to 166 each bind N-acetyl-alpha-D-galactosamine; these read HPKG, DIHER, DRH, and DKH.

Homodimer. In terms of tissue distribution, highest expression in the posterior part of the mantle. Highly expressed in gills and to a lesser extent in mid mantle and anterior muscle. Lowest expression in digestive gland and posterior adductor muscle. Scarcely detectable in hemocytes.

Its activity is regulated as follows. Agglutination of E.coli is inhibited by alpha-galactoside melibiose, but not by beta-galactoside lactose. Functionally, alpha-D-galactose-binding lectin. Binds D-GalNAc, but not glucose or its derivatives. Has hemagglutinating activity towards rabbit erythrocytes. Agglutinates bacteria. Has bacteriostatic activity on both Gram-positive and Gram-negative bacteria including B.subtilis, S.aureus, E.coli and V.parahaemolyticus, respectively. Has a dose-dependent cytotoxic effect on the human globotriaosylceramide (Gb3)-expressing Epstein-Barr virus (EBV)-positive Burkitt's lymphoma (Raji) cell line. Has dose-dependent cytotoxic effect on another Burkitt's lymphoma (Ramos) cell line, which does not possess the EBV genome, but also expresses Gb3. Binds to Gb3 in these cells leading to phosphorylation of MEK1/2, ERK1/2, JNK and p38 kinase, activation of caspase-9/3 and to expression of p21 and tumor necrosis factor (TNF)-alpha. No cytotoxic effect on the human chronic myelogenous leukemia (K-562) cell line, which does not express Gb3. May be involved in innate immunity acting as an antibacterial or antifungal agent. May be a pattern recognition receptor (PRR) involved in recognition of glycans found on parasitic or symbiotic microorganisms. This is Alpha-D-galactose-binding lectin from Mytilus galloprovincialis (Mediterranean mussel).